The following is a 1345-amino-acid chain: Aldehyde oxidase 2 (1345 aa).

In terms of domain architecture, 2Fe-2S ferredoxin-type spans 9–96; sequence DDLEFFVNGR…GAAVTTVEGV (88 aa). Residues Cys-48, Cys-53, Cys-56, and Cys-78 each coordinate [2Fe-2S] cluster. Gln-117 lines the Mo-molybdopterin pocket. [2Fe-2S] cluster is bound by residues Cys-118, Cys-121, Cys-153, and Cys-155. Cys-155 serves as a coordination point for Mo-molybdopterin. Residues 238–423 form the FAD-binding PCMH-type domain; that stretch reads FYGERITWIA…GSVYIPHSQK (186 aa). FAD is bound by residues 266 to 273, Ala-347, Ser-356, His-360, Asp-369, and Leu-413; that span reads LISGNTAL. Residues 812–813, 1094–1097, Gln-1209, and Leu-1274 each bind Mo-molybdopterin; these read GF and ASVG. Glu-1276 acts as the Proton acceptor; for azaheterocycle hydroxylase activity in catalysis.

Belongs to the xanthine dehydrogenase family. As to quaternary structure, homodimer. The cofactor is [2Fe-2S] cluster. It depends on FAD as a cofactor. Mo-molybdopterin is required as a cofactor. As to expression, expressed in olfactory mucosa epithelium (at protein level). Detected in skin.

The protein resides in the cytoplasm. The enzyme catalyses an aldehyde + O2 + H2O = a carboxylate + H2O2 + H(+). In terms of biological role, oxidase with broad substrate specificity, oxidizing aromatic azaheterocycles, such as phthalazine, as well as aldehydes, such as benzaldehyde and retinal. Cannot use hypoxanthine as substrate. The protein is Aldehyde oxidase 2 (Aox2) of Mus musculus (Mouse).